Here is a 648-residue protein sequence, read N- to C-terminus: Macrolide export ATP-binding/permease protein MacB (648 aa).

The 239-residue stretch at 5–243 (LELCNVSRSY…QGVDAAVVNT (239 aa)) folds into the ABC transporter domain. 41 to 48 (GVSGSGKS) contacts ATP. A run of 5 helical transmembrane segments spans residues 273–293 (LLTMLGIIIGIASVVSIVVVG), 417–437 (ANVVGEVVLVGNMPVIVIGVA), 523–543 (LFLTLVAVISLVVGGIGVMNI), 578–598 (LVCLVGGALGISLSMFIAFML), and 611–631 (LTALASAFLCSTFTGILFGWL).

The protein belongs to the ABC transporter superfamily. Macrolide exporter (TC 3.A.1.122) family. Homodimer. Part of the tripartite efflux system MacAB-TolC, which is composed of an inner membrane transporter, MacB, a periplasmic membrane fusion protein, MacA, and an outer membrane component, TolC. The complex forms a large protein conduit and can translocate molecules across both the inner and outer membranes. Interacts with MacA.

The protein resides in the cell inner membrane. Its function is as follows. Part of the tripartite efflux system MacAB-TolC. MacB is a non-canonical ABC transporter that contains transmembrane domains (TMD), which form a pore in the inner membrane, and an ATP-binding domain (NBD), which is responsible for energy generation. Confers resistance against macrolides. This Salmonella paratyphi A (strain ATCC 9150 / SARB42) protein is Macrolide export ATP-binding/permease protein MacB.